The following is a 500-amino-acid chain: Formate-nitrite transporter 3 (500 aa).

Topologically, residues 1–31 are cytoplasmic; that stretch reads MVLAASPEAYRKVIEYGIKKTKLRIDRLFLQ. Residues 32-52 form a helical membrane-spanning segment; sequence AIMAGIYVGMAGHACTALAGA. The Extracellular segment spans residues 53–69; that stretch reads YSTDPANPLAVSKATQK. The helical transmembrane segment at 70 to 90 threads the bilayer; it reads FLYASLFPVAFIAIIFTGAEL. At 91–113 the chain is on the cytoplasmic side; sequence FTGNTMTMLVCLLERRVTALQLC. A helical transmembrane segment spans residues 114–134; it reads INWICSLVGNWAGALFAAYFL. Over 135–164 the chain is Extracellular; that stretch reads SYLPGVLQDPDHLHYLEDVAAHKTELSFLQ. Residues 165–185 traverse the membrane as a helical segment; the sequence is CFCLAVGCNTFVCLAVWFVIA. The Cytoplasmic segment spans residues 186–192; that stretch reads SDDAAGK. A helical membrane pass occupies residues 193–213; sequence IMSMWFPIVSFCVAGYEHIIA. The Extracellular segment spans residues 214–237; that stretch reads NFYTLQCALMHGVGPGVGTVILKN. A helical membrane pass occupies residues 238–258; that stretch reads FIPTLLGNIVGGCGLVGAVYW. Over 259-500 the chain is Cytoplasmic; the sequence is YNFYPTVCVV…ALEEHPASTI (242 aa). The segment at 411–500 is disordered; it reads PLRENSGVPS…ALEEHPASTI (90 aa). Basic and acidic residues-rich tracts occupy residues 428-444 and 466-485; these read GRVRRSSREREPERGGE and FHPHVPREVEQSSLLEETRV.

Belongs to the FNT transporter (TC 1.A.16) family. In terms of assembly, homopentamer.

It is found in the cell membrane. The catalysed reaction is (S)-lactate(in) + H(+)(in) = (S)-lactate(out) + H(+)(out). The enzyme catalyses formate(in) + H(+)(in) = formate(out) + H(+)(out). It carries out the reaction pyruvate(out) + H(+)(out) = pyruvate(in) + H(+)(in). It catalyses the reaction acetate(out) + H(+)(out) = acetate(in) + H(+)(in). Inhibited by p-chloromercuribenzene sulfonate (pCMBS). Methyl methanethiosulfonate (MMTS) inhibits L-lactate but not formate transport. Inhibited by the Malaria Box compound MMV007839. Inhibited by BH-296, BH-317, BH-326 and BH-388 compounds. Its function is as follows. Monocarboxylate-proton symporter; active in acidic-to-neutral pH range. Transports L-lactate and formate. The sequence is that of Formate-nitrite transporter 3 from Toxoplasma gondii (strain ATCC 50611 / Me49).